Reading from the N-terminus, the 324-residue chain is tRNA uridine(34) hydroxylase (324 aa).

A Rhodanese domain is found at 145–239 (NDKKTIFIDM…YVHDARKNGL (95 aa)). Catalysis depends on C199, which acts as the Cysteine persulfide intermediate.

It belongs to the TrhO family.

It carries out the reaction uridine(34) in tRNA + AH2 + O2 = 5-hydroxyuridine(34) in tRNA + A + H2O. In terms of biological role, catalyzes oxygen-dependent 5-hydroxyuridine (ho5U) modification at position 34 in tRNAs. This chain is tRNA uridine(34) hydroxylase, found in Buchnera aphidicola subsp. Acyrthosiphon pisum (strain Tuc7).